The primary structure comprises 686 residues: Mannan-binding lectin serine protease 2 (686 aa).

Residues 1–15 (MRLLTLLGLLCGSVA) form the signal peptide. The CUB 1 domain occupies 16–137 (TPLGPKWPEP…TGFEAFYAAE (122 aa)). Glu67, Asp75, Asp120, Ser122, Asn123, Asp138, Ile139, and Glu141 together coordinate Ca(2+). Cysteines 72 and 90 form a disulfide. The EGF-like; calcium-binding domain maps to 138-181 (DIDECQVAPGEAPTCDHHCHNHLGGFYCSCRAGYVLHRNKRTCS). Disulfide bonds link Cys142–Cys156, Cys152–Cys165, Cys167–Cys180, Cys184–Cys211, Cys241–Cys259, Cys300–Cys348, Cys328–Cys361, Cys366–Cys412, Cys396–Cys430, Cys434–Cys552, Cys598–Cys618, and Cys629–Cys660. Ca(2+) contacts are provided by Asn158, His159, and Gly162. The residue at position 158 (Asn158) is a (3R)-3-hydroxyasparagine. The CUB 2 domain occupies 184 to 296 (CSGQVFTQRS…TGWKIHYTST (113 aa)). 2 consecutive Sushi domains span residues 298-363 (QPCP…ACSI) and 364-432 (VDCG…VCEP). The Peptidase S1 domain maps to 445–684 (IYGGQKAKPG…YIPWIENIIS (240 aa)). Catalysis depends on charge relay system residues His483 and Asp532. The Charge relay system role is filled by Ser633.

This sequence belongs to the peptidase S1 family. Homodimer; disulfide-linked. Binds MBL2. Isoform 2 binds to MASP1. Binds SERPING1. Dimerization and MBL2 binding requires calcium ions. In terms of processing, the iron and 2-oxoglutarate dependent 3-hydroxylation of aspartate and asparagine is (R) stereospecific within EGF domains. Activated by cleavage after Arg-444. The uncleaved zymogen is inactive towards synthetic substrates, but has sufficient activity to effect autocatalytic cleavage. In terms of tissue distribution, plasma.

It localises to the secreted. It carries out the reaction Selective cleavage after Arg-223 in complement component C2 (-Ser-Leu-Gly-Arg-|-Lys-Ile-Gln-Ile) and after Arg-76 in complement component C4 (-Gly-Leu-Gln-Arg-|-Ala-Leu-Glu-Ile).. In terms of biological role, serum protease that plays an important role in the activation of the complement system via mannose-binding lectin. After activation by auto-catalytic cleavage it cleaves C2 and C4, leading to their activation and to the formation of C3 convertase. The polypeptide is Mannan-binding lectin serine protease 2 (MASP2) (Homo sapiens (Human)).